The primary structure comprises 250 residues: 4-hydroxy-tetrahydrodipicolinate reductase (250 aa).

NAD(+) is bound by residues G9–M14, G79–T81, and S103–M106. H135 serves as the catalytic Proton donor/acceptor. H136 provides a ligand contact to (S)-2,3,4,5-tetrahydrodipicolinate. K139 acts as the Proton donor in catalysis. G145–T146 contributes to the (S)-2,3,4,5-tetrahydrodipicolinate binding site.

Belongs to the DapB family.

It localises to the cytoplasm. The enzyme catalyses (S)-2,3,4,5-tetrahydrodipicolinate + NAD(+) + H2O = (2S,4S)-4-hydroxy-2,3,4,5-tetrahydrodipicolinate + NADH + H(+). The catalysed reaction is (S)-2,3,4,5-tetrahydrodipicolinate + NADP(+) + H2O = (2S,4S)-4-hydroxy-2,3,4,5-tetrahydrodipicolinate + NADPH + H(+). Its pathway is amino-acid biosynthesis; L-lysine biosynthesis via DAP pathway; (S)-tetrahydrodipicolinate from L-aspartate: step 4/4. Its function is as follows. Catalyzes the conversion of 4-hydroxy-tetrahydrodipicolinate (HTPA) to tetrahydrodipicolinate. The polypeptide is 4-hydroxy-tetrahydrodipicolinate reductase (Rickettsia bellii (strain OSU 85-389)).